The chain runs to 493 residues: Galactose-1-phosphate uridylyltransferase (493 aa).

Belongs to the galactose-1-phosphate uridylyltransferase type 2 family.

Its subcellular location is the cytoplasm. The catalysed reaction is alpha-D-galactose 1-phosphate + UDP-alpha-D-glucose = alpha-D-glucose 1-phosphate + UDP-alpha-D-galactose. The protein operates within carbohydrate metabolism; galactose metabolism. The chain is Galactose-1-phosphate uridylyltransferase from Lactococcus lactis subsp. cremoris (strain MG1363).